A 365-amino-acid chain; its full sequence is Chorismate synthase (365 aa).

NADP(+)-binding residues include Arg48 and Arg54. FMN-binding positions include 131–133 (RSS), 243–244 (NA), Gly288, 303–307 (KPTSS), and Arg329.

Belongs to the chorismate synthase family. In terms of assembly, homotetramer. FMNH2 serves as cofactor.

It catalyses the reaction 5-O-(1-carboxyvinyl)-3-phosphoshikimate = chorismate + phosphate. It functions in the pathway metabolic intermediate biosynthesis; chorismate biosynthesis; chorismate from D-erythrose 4-phosphate and phosphoenolpyruvate: step 7/7. In terms of biological role, catalyzes the anti-1,4-elimination of the C-3 phosphate and the C-6 proR hydrogen from 5-enolpyruvylshikimate-3-phosphate (EPSP) to yield chorismate, which is the branch point compound that serves as the starting substrate for the three terminal pathways of aromatic amino acid biosynthesis. This reaction introduces a second double bond into the aromatic ring system. The protein is Chorismate synthase of Sinorhizobium fredii (strain NBRC 101917 / NGR234).